The following is a 186-amino-acid chain: Peptidyl-tRNA hydrolase (186 aa).

A tRNA-binding site is contributed by Tyr-14. His-19 functions as the Proton acceptor in the catalytic mechanism. Tyr-64, Asn-66, and Asn-113 together coordinate tRNA.

This sequence belongs to the PTH family. In terms of assembly, monomer.

Its subcellular location is the cytoplasm. It carries out the reaction an N-acyl-L-alpha-aminoacyl-tRNA + H2O = an N-acyl-L-amino acid + a tRNA + H(+). Hydrolyzes ribosome-free peptidyl-tRNAs (with 1 or more amino acids incorporated), which drop off the ribosome during protein synthesis, or as a result of ribosome stalling. In terms of biological role, catalyzes the release of premature peptidyl moieties from peptidyl-tRNA molecules trapped in stalled 50S ribosomal subunits, and thus maintains levels of free tRNAs and 50S ribosomes. This chain is Peptidyl-tRNA hydrolase, found in Agathobacter rectalis (strain ATCC 33656 / DSM 3377 / JCM 17463 / KCTC 5835 / VPI 0990) (Eubacterium rectale).